A 274-amino-acid polypeptide reads, in one-letter code: NAD kinase (274 aa).

D60 serves as the catalytic Proton acceptor. Residues 60–61, K65, 127–128, and R152 each bind NAD(+); these read DG and NE.

The protein belongs to the NAD kinase family. It depends on a divalent metal cation as a cofactor.

It localises to the cytoplasm. It catalyses the reaction NAD(+) + ATP = ADP + NADP(+) + H(+). Functionally, involved in the regulation of the intracellular balance of NAD and NADP, and is a key enzyme in the biosynthesis of NADP. Catalyzes specifically the phosphorylation on 2'-hydroxyl of the adenosine moiety of NAD to yield NADP. This Mycoplasmoides gallisepticum (strain R(low / passage 15 / clone 2)) (Mycoplasma gallisepticum) protein is NAD kinase.